We begin with the raw amino-acid sequence, 303 residues long: UDP-N-acetylenolpyruvoylglucosamine reductase (303 aa).

In terms of domain architecture, FAD-binding PCMH-type spans 29 to 196 (KIGGPADVLV…LEAVLQLEQK (168 aa)). The active site involves Arg174. Ser225 (proton donor) is an active-site residue. Glu295 is a catalytic residue.

Belongs to the MurB family. FAD serves as cofactor.

The protein resides in the cytoplasm. It carries out the reaction UDP-N-acetyl-alpha-D-muramate + NADP(+) = UDP-N-acetyl-3-O-(1-carboxyvinyl)-alpha-D-glucosamine + NADPH + H(+). It functions in the pathway cell wall biogenesis; peptidoglycan biosynthesis. Its function is as follows. Cell wall formation. This Bacillus licheniformis (strain ATCC 14580 / DSM 13 / JCM 2505 / CCUG 7422 / NBRC 12200 / NCIMB 9375 / NCTC 10341 / NRRL NRS-1264 / Gibson 46) protein is UDP-N-acetylenolpyruvoylglucosamine reductase.